The primary structure comprises 179 residues: Peptidyl-tRNA hydrolase (179 aa).

Y15 is a tRNA binding site. The Proton acceptor role is filled by H20. TRNA contacts are provided by Y66, N68, and N114.

This sequence belongs to the PTH family. As to quaternary structure, monomer.

Its subcellular location is the cytoplasm. The catalysed reaction is an N-acyl-L-alpha-aminoacyl-tRNA + H2O = an N-acyl-L-amino acid + a tRNA + H(+). Functionally, hydrolyzes ribosome-free peptidyl-tRNAs (with 1 or more amino acids incorporated), which drop off the ribosome during protein synthesis, or as a result of ribosome stalling. In terms of biological role, catalyzes the release of premature peptidyl moieties from peptidyl-tRNA molecules trapped in stalled 50S ribosomal subunits, and thus maintains levels of free tRNAs and 50S ribosomes. In Chlamydia trachomatis serovar L2 (strain ATCC VR-902B / DSM 19102 / 434/Bu), this protein is Peptidyl-tRNA hydrolase.